A 763-amino-acid polypeptide reads, in one-letter code: Phosphoglycerol transferase I (763 aa).

4 helical membrane passes run 1–21 (MSEL…AWKA), 26–46 (WWFA…ITLF), 77–97 (ILPG…LGWI), and 108–128 (FGYS…SPAF).

This sequence belongs to the OpgB family.

Its subcellular location is the cell inner membrane. The enzyme catalyses a phosphatidylglycerol + a membrane-derived-oligosaccharide D-glucose = a 1,2-diacyl-sn-glycerol + a membrane-derived-oligosaccharide 6-(glycerophospho)-D-glucose.. The protein operates within glycan metabolism; osmoregulated periplasmic glucan (OPG) biosynthesis. Its function is as follows. Transfers a phosphoglycerol residue from phosphatidylglycerol to the membrane-bound nascent glucan backbones. The sequence is that of Phosphoglycerol transferase I from Escherichia coli (strain UTI89 / UPEC).